Consider the following 233-residue polypeptide: 28 kDa ribonucleoprotein, chloroplastic (233 aa).

Polar residues predominate over residues 1 to 16 (CVAQTSEWEQEGSTNA). The disordered stretch occupies residues 1–52 (CVAQTSEWEQEGSTNAVLEGESDPEGAVSWGSETQVSDEGGVEGGQGFSEPP). RRM domains follow at residues 55–133 (AKLF…KAAP) and 149–227 (CRVY…VAEE).

The protein resides in the plastid. Its subcellular location is the chloroplast. Functionally, probably involved in the 3'-end processing of chloroplast mRNA's. In Spinacia oleracea (Spinach), this protein is 28 kDa ribonucleoprotein, chloroplastic.